Here is a 638-residue protein sequence, read N- to C-terminus: Threonine--tRNA ligase (638 aa).

Residues 1-61 (MPVVTLPDGS…EADAEVALVT (61 aa)) enclose the TGS domain. The catalytic stretch occupies residues 242–533 (DHRKLGKALD…LTEHYAGQYP (292 aa)). Residues Cys333, His384, and His510 each coordinate Zn(2+).

This sequence belongs to the class-II aminoacyl-tRNA synthetase family. As to quaternary structure, homodimer. Zn(2+) serves as cofactor.

Its subcellular location is the cytoplasm. The catalysed reaction is tRNA(Thr) + L-threonine + ATP = L-threonyl-tRNA(Thr) + AMP + diphosphate + H(+). Catalyzes the attachment of threonine to tRNA(Thr) in a two-step reaction: L-threonine is first activated by ATP to form Thr-AMP and then transferred to the acceptor end of tRNA(Thr). Also edits incorrectly charged L-seryl-tRNA(Thr). In Methylococcus capsulatus (strain ATCC 33009 / NCIMB 11132 / Bath), this protein is Threonine--tRNA ligase.